The sequence spans 375 residues: MKILVDENMPYAEALFQQLGDVQAVPGRPIPLDALAGADALMVRSVTKVNEALLQGTSIRFVGTATAGTDHVDDNWLQQQGIGFSAAPGCNAIAVVEYVFSALMMMAERDGFQLRDKTVGIIGVGNVGSRLNARLQALGVRTLLCDPPRADRGDNERFWPLEKLVREADVLTFHTPLNKNGPYQSLHMADDELLAALPDGRILINACRGAVVDNTALLRALEKGKKLSVVLDVWEPEPELSLPLLARVDIGTPHIAGYTLEGKARGTTQVFEAFSQYLGQPQSVELASLLPQPEFSQLRLNGELDEGKLKRLMHLVYDVRRDDAPLRRVADQSGEFDRLRKHYQERREWSSLCVQCDDAASAELLQKLGFSTQLL.

2 residues coordinate substrate: serine 45 and threonine 66. Positions 146 and 175 each coordinate NAD(+). Arginine 208 is a catalytic residue. Residue aspartate 232 coordinates NAD(+). Glutamate 237 is an active-site residue. Catalysis depends on histidine 254, which acts as the Proton donor. An NAD(+)-binding site is contributed by glycine 257. Residue tyrosine 258 participates in substrate binding.

This sequence belongs to the D-isomer specific 2-hydroxyacid dehydrogenase family. PdxB subfamily. As to quaternary structure, homodimer.

It localises to the cytoplasm. The catalysed reaction is 4-phospho-D-erythronate + NAD(+) = (R)-3-hydroxy-2-oxo-4-phosphooxybutanoate + NADH + H(+). Its pathway is cofactor biosynthesis; pyridoxine 5'-phosphate biosynthesis; pyridoxine 5'-phosphate from D-erythrose 4-phosphate: step 2/5. In terms of biological role, catalyzes the oxidation of erythronate-4-phosphate to 3-hydroxy-2-oxo-4-phosphonooxybutanoate. This chain is Erythronate-4-phosphate dehydrogenase, found in Yersinia enterocolitica serotype O:8 / biotype 1B (strain NCTC 13174 / 8081).